Consider the following 208-residue polypeptide: Small ribosomal subunit protein uS4 (208 aa).

The 62-residue stretch at 98-159 (RRLDNVAYRL…KSRKVAAISE (62 aa)) folds into the S4 RNA-binding domain.

Belongs to the universal ribosomal protein uS4 family. As to quaternary structure, part of the 30S ribosomal subunit. Contacts protein S5. The interaction surface between S4 and S5 is involved in control of translational fidelity.

One of the primary rRNA binding proteins, it binds directly to 16S rRNA where it nucleates assembly of the body of the 30S subunit. In terms of biological role, with S5 and S12 plays an important role in translational accuracy. The protein is Small ribosomal subunit protein uS4 of Citrifermentans bemidjiense (strain ATCC BAA-1014 / DSM 16622 / JCM 12645 / Bem) (Geobacter bemidjiensis).